Here is a 238-residue protein sequence, read N- to C-terminus: 7-cyano-7-deazaguanine synthase (238 aa).

10–20 contributes to the ATP binding site; that stretch reads LSGGLDSSTVL. Zn(2+)-binding residues include cysteine 190, cysteine 198, cysteine 201, and cysteine 204.

It belongs to the QueC family. It depends on Zn(2+) as a cofactor.

The catalysed reaction is 7-carboxy-7-deazaguanine + NH4(+) + ATP = 7-cyano-7-deazaguanine + ADP + phosphate + H2O + H(+). It functions in the pathway purine metabolism; 7-cyano-7-deazaguanine biosynthesis. Functionally, catalyzes the ATP-dependent conversion of 7-carboxy-7-deazaguanine (CDG) to 7-cyano-7-deazaguanine (preQ(0)). The protein is 7-cyano-7-deazaguanine synthase of Thermoplasma acidophilum (strain ATCC 25905 / DSM 1728 / JCM 9062 / NBRC 15155 / AMRC-C165).